The following is a 362-amino-acid chain: S-adenosylmethionine-dependent nucleotide dehydratase RSAD2 (362 aa).

The disordered stretch occupies residues 49-71 (QQLQGKTEAGEPPRAQEDSHLPT). Residues 56–68 (EAGEPPRAQEDSH) show a composition bias toward basic and acidic residues. In terms of domain architecture, Radical SAM core spans 70–290 (PTTPTSVNYH…LDRHKDVSCL (221 aa)). Residues Cys-84, Cys-88, and Cys-91 each coordinate [4Fe-4S] cluster. The residue at position 198 (Lys-198) is an N6-acetyllysine. Lys-207 is covalently cross-linked (Glycyl lysine isopeptide (Lys-Gly) (interchain with G-Cter in ubiquitin)).

It belongs to the radical SAM superfamily. RSAD2 family. In terms of assembly, homodimer. Interacts with IRAK1 and TRAF6. Interacts with FPPS. Interacts with HADHB. Interacts (via C-terminus) with VAPA/VAP33 (via C-terminus). [4Fe-4S] cluster is required as a cofactor. In terms of processing, acetylated by HAT1. HAT1-mediated acetylation of Lys-198 in turn recruits UBE4A that stimulates RSAD2 polyubiquitination leading to proteasomal degradation. 'Lys-6'-linked polyubiquitination at Lys-207 leads to RSAD2 protein degradation.

The protein localises to the endoplasmic reticulum membrane. The protein resides in the golgi apparatus. It localises to the endoplasmic reticulum. Its subcellular location is the lipid droplet. It is found in the mitochondrion. The protein localises to the mitochondrion inner membrane. The protein resides in the mitochondrion outer membrane. The enzyme catalyses CTP + AH2 + S-adenosyl-L-methionine = 3'-deoxy-3',4'-didehydro-CTP + 5'-deoxyadenosine + L-methionine + A + H2O + H(+). Its activity is regulated as follows. IRAK1 and TRAF6 synergistically activate RSAD2 increasing its activity with CTP as substrate about 10-fold. Interferon-inducible antiviral protein which plays a major role in the cell antiviral state induced by type I and type II interferon. Catalyzes the conversion of cytidine triphosphate (CTP) to 3'-deoxy-3',4'-didehydro-CTP (ddhCTP) via a SAM-dependent radical mechanism. In turn, ddhCTP acts as a chain terminator for the RNA-dependent RNA polymerases from multiple viruses and directly inhibits viral replication. Therefore, inhibits a wide range of DNA and RNA viruses. Also promotes TLR7 and TLR9-dependent production of IFN-beta production in plasmacytoid dendritic cells (pDCs) by facilitating 'Lys-63'-linked ubiquitination of IRAK1 by TRAF6. Plays a role in CD4+ T-cells activation and differentiation. Facilitates T-cell receptor (TCR)-mediated GATA3 activation and optimal T-helper 2 (Th2) cytokine production by modulating NFKB1 and JUNB activities. Can inhibit secretion of soluble proteins. This is S-adenosylmethionine-dependent nucleotide dehydratase RSAD2 from Sus scrofa (Pig).